We begin with the raw amino-acid sequence, 272 residues long: Putative phosphoenolpyruvate synthase regulatory protein (272 aa).

152–159 (GVSRCGKT) contacts ADP.

This sequence belongs to the pyruvate, phosphate/water dikinase regulatory protein family. PSRP subfamily.

The catalysed reaction is [pyruvate, water dikinase] + ADP = [pyruvate, water dikinase]-phosphate + AMP + H(+). It catalyses the reaction [pyruvate, water dikinase]-phosphate + phosphate + H(+) = [pyruvate, water dikinase] + diphosphate. Its function is as follows. Bifunctional serine/threonine kinase and phosphorylase involved in the regulation of the phosphoenolpyruvate synthase (PEPS) by catalyzing its phosphorylation/dephosphorylation. This chain is Putative phosphoenolpyruvate synthase regulatory protein, found in Pseudomonas putida (strain ATCC 700007 / DSM 6899 / JCM 31910 / BCRC 17059 / LMG 24140 / F1).